The following is a 214-amino-acid chain: Small ribosomal subunit protein uS2 (214 aa).

The protein belongs to the universal ribosomal protein uS2 family.

This chain is Small ribosomal subunit protein uS2, found in Methanococcoides burtonii (strain DSM 6242 / NBRC 107633 / OCM 468 / ACE-M).